The chain runs to 122 residues: Large ribosomal subunit protein uL22 (122 aa).

Belongs to the universal ribosomal protein uL22 family. As to quaternary structure, part of the 50S ribosomal subunit.

Functionally, this protein binds specifically to 23S rRNA; its binding is stimulated by other ribosomal proteins, e.g. L4, L17, and L20. It is important during the early stages of 50S assembly. It makes multiple contacts with different domains of the 23S rRNA in the assembled 50S subunit and ribosome. Its function is as follows. The globular domain of the protein is located near the polypeptide exit tunnel on the outside of the subunit, while an extended beta-hairpin is found that lines the wall of the exit tunnel in the center of the 70S ribosome. The sequence is that of Large ribosomal subunit protein uL22 from Caldicellulosiruptor saccharolyticus (strain ATCC 43494 / DSM 8903 / Tp8T 6331).